The primary structure comprises 291 residues: E3 ubiquitin-protein ligase MARCHF8 (291 aa).

Positions 22 to 72 (YRSKTKEKEREEQNEKTLGHFMSHSSNISKAGSPPSASAPAPVSSFSRTSI) are disordered. Residues 25 to 39 (KTKEKEREEQNEKTL) show a composition bias toward basic and acidic residues. Residues 50 to 72 (SKAGSPPSASAPAPVSSFSRTSI) are compositionally biased toward low complexity. The RING-CH-type zinc finger occupies 72–133 (ITPSSQDICR…ELCKYEFIME (62 aa)). Zn(2+)-binding residues include C80, C83, C97, C99, H107, C110, C123, and C126. The next 2 helical transmembrane spans lie at 157–177 (CSVT…YVLI) and 197–217 (FWTK…FMYV). S253 carries the phosphoserine modification.

As to quaternary structure, interacts with CD86. In terms of tissue distribution, broadly expressed. Present in immature dendritic cells (at protein level).

It is found in the golgi apparatus membrane. The protein localises to the endoplasmic reticulum membrane. Its subcellular location is the cytoplasmic vesicle membrane. It localises to the lysosome membrane. The protein resides in the early endosome membrane. The enzyme catalyses S-ubiquitinyl-[E2 ubiquitin-conjugating enzyme]-L-cysteine + [acceptor protein]-L-lysine = [E2 ubiquitin-conjugating enzyme]-L-cysteine + N(6)-ubiquitinyl-[acceptor protein]-L-lysine.. It functions in the pathway protein modification; protein ubiquitination. In terms of biological role, E3 ubiquitin-protein ligase that plays several important roles in innate immunity and adaptive immunity. Mediates ubiquitination of CD86 and MHC class II proteins, such as HLA-DR alpha and beta, and promotes their subsequent endocytosis and sorting to lysosomes via multivesicular bodies. Possesses a very broad antiviral activity by specifically inactivating different viral fusion proteins. Targets and ubiquitinates cytoplasmic lysine residues of viral envelope glycoproteins with single transmembrane domains leading to their lysosomal degradation. Therefore, shows broad-spectrum inhibition against many viruses including retroviruses, rhabdoviruses, arenaviruses, sarbecoviruses or influenzaviruses. Strongly blocks human immunodeficiency virus type 1 envelope glycoprotein incorporation into virions by down-regulating its cell surface expression. Also blocks ebola virus glycoprotein/GP incorporation via surface down-regulation. Mediates 'Lys-63'-linked polyubiquitination of influenza M2 to target it to lysosome for degradation. Mediates the regulation of constitutive ubiquitination and trafficking of the viral restriction factor BST2 within the endocytic pathway. Plays a role in maintenance of immune tolerance to self by promoting the turnover and proteasomal degradation of PD-L1/CD274 via ubiquitination. Catalyzes the 'Lys-63'-linked polyubiquitylation of cGAS thereby inhibiting its DNA binding ability and impairing its antiviral innate immunity. Negatively regulates IL7-mediated T-cell homeostasis by mediating 'Lys-27'-linked polyubiquitination of IL7R, leading to its lysosomal degradation. Its function is as follows. (Microbial infection) Mediates 'Lys-63'-linked polyubiquitination of hepatitis C virus/HCV protein NS2 which allows its binding to HGS, an ESCRT-0 complex component, and this interaction is essential for HCV envelopment. This chain is E3 ubiquitin-protein ligase MARCHF8, found in Homo sapiens (Human).